Here is a 369-residue protein sequence, read N- to C-terminus: MSDLEQLERQILEDIAAAADEPAIEAVRVAALGKKGSVSEKLKTLGSMTPEERQAQGPAINGLKNRVTEALTERKTELRKQAIAARLEREKVDVTLPVRESAASRGRIHPISQVIDEITAIFADMGFSIAEGPDIETDYYNFTALNFPEGHPAREMHDTFFFNADEKGERKLLRTHTSPVQVHTMEKFAAIRDKEDRDEPIRIVIPGKTYRMDSDATHSPMFHQVEGLVVDKSANVANMKWVLEEFCKSFFEVPSVKMRMRPSFFPFTEPSVEVDIQCDRSGPHVKFGEGNDWLEILGCGMVHPNVLRASGYDPDVYQGFAWGMGIDRIAMLKYGMPDLRAFFDADVRWIEHYGFRPLDIPTLFGGLSA.

Residue Glu269 coordinates Mg(2+).

It belongs to the class-II aminoacyl-tRNA synthetase family. Phe-tRNA synthetase alpha subunit type 1 subfamily. As to quaternary structure, tetramer of two alpha and two beta subunits. Mg(2+) serves as cofactor.

It is found in the cytoplasm. It catalyses the reaction tRNA(Phe) + L-phenylalanine + ATP = L-phenylalanyl-tRNA(Phe) + AMP + diphosphate + H(+). The chain is Phenylalanine--tRNA ligase alpha subunit from Brucella anthropi (strain ATCC 49188 / DSM 6882 / CCUG 24695 / JCM 21032 / LMG 3331 / NBRC 15819 / NCTC 12168 / Alc 37) (Ochrobactrum anthropi).